A 79-amino-acid chain; its full sequence is Small ribosomal subunit protein bS18 (79 aa).

Belongs to the bacterial ribosomal protein bS18 family. As to quaternary structure, part of the 30S ribosomal subunit. Forms a tight heterodimer with protein bS6.

Its function is as follows. Binds as a heterodimer with protein bS6 to the central domain of the 16S rRNA, where it helps stabilize the platform of the 30S subunit. In Renibacterium salmoninarum (strain ATCC 33209 / DSM 20767 / JCM 11484 / NBRC 15589 / NCIMB 2235), this protein is Small ribosomal subunit protein bS18.